Here is a 410-residue protein sequence, read N- to C-terminus: MVKTVALLTAGGLAPCLSSAVGGLIERYTEMSPETNIILYLNGYKGLLLGEKVLVTPAMRLQAHVLHTVGGSCIGNSRVKMANVADCVKRGLVKEGQDPRQVAADQLIKDGVDVLHTIGGDDTNTAAADLAAYLKAHGYTLRVIGLPKTIDNDIVPVRQSLGAMTAAEQASRFFQNVVAEQTANPRVLLVHEVMGRSCGYLTAQAADYYRAQLAHREFAPELGHTRERYDIHAVYVPEMTIDLKAEAARLRAVMERVGCVNIFLSEGAGINDIVAEMTAKGETVPRDPFGHVKIDLINPGAWFGKQFGGMVGADKVLVQKSGYFSRSAPANAEDLRLIKGMVDLAVDCALRGEAGLIGHDEERNGVLRAIEFERVKGAKAFNIDHPWFTHLLNEIGQPKGAKVSVAHGDE.

Residue Gly12 participates in diphosphate binding. Asp121 contributes to the Mg(2+) binding site. Substrate is bound by residues 149-151 (TID), 194-196 (MGR), Glu266, and 323-326 (YFSR). Asp151 acts as the Proton acceptor in catalysis.

This sequence belongs to the phosphofructokinase type A (PFKA) family. PPi-dependent PFK group II subfamily. Clade 'P' sub-subfamily. As to quaternary structure, homodimer or homotetramer. Requires Mg(2+) as cofactor.

It localises to the cytoplasm. It catalyses the reaction beta-D-fructose 6-phosphate + diphosphate = beta-D-fructose 1,6-bisphosphate + phosphate + H(+). It functions in the pathway carbohydrate degradation; glycolysis; D-glyceraldehyde 3-phosphate and glycerone phosphate from D-glucose: step 3/4. With respect to regulation, non-allosteric. Its function is as follows. Catalyzes the phosphorylation of D-fructose 6-phosphate, the first committing step of glycolysis. Uses inorganic phosphate (PPi) as phosphoryl donor instead of ATP like common ATP-dependent phosphofructokinases (ATP-PFKs), which renders the reaction reversible, and can thus function both in glycolysis and gluconeogenesis. Consistently, PPi-PFK can replace the enzymes of both the forward (ATP-PFK) and reverse (fructose-bisphosphatase (FBPase)) reactions. This Mastigamoeba balamuthi (Phreatamoeba balamuthi) protein is Pyrophosphate--fructose 6-phosphate 1-phosphotransferase.